The following is a 228-amino-acid chain: 5'-methylthioadenosine/S-adenosylhomocysteine nucleosidase (228 aa).

Residue Glu-11 is the Proton acceptor of the active site. Substrate-binding positions include Gly-77, Ile-151, and 172-173 (ME). The Proton donor role is filled by Asp-196.

It belongs to the PNP/UDP phosphorylase family. MtnN subfamily.

The catalysed reaction is S-adenosyl-L-homocysteine + H2O = S-(5-deoxy-D-ribos-5-yl)-L-homocysteine + adenine. The enzyme catalyses S-methyl-5'-thioadenosine + H2O = 5-(methylsulfanyl)-D-ribose + adenine. It carries out the reaction 5'-deoxyadenosine + H2O = 5-deoxy-D-ribose + adenine. Its pathway is amino-acid biosynthesis; L-methionine biosynthesis via salvage pathway; S-methyl-5-thio-alpha-D-ribose 1-phosphate from S-methyl-5'-thioadenosine (hydrolase route): step 1/2. In terms of biological role, catalyzes the irreversible cleavage of the glycosidic bond in both 5'-methylthioadenosine (MTA) and S-adenosylhomocysteine (SAH/AdoHcy) to adenine and the corresponding thioribose, 5'-methylthioribose and S-ribosylhomocysteine, respectively. Also cleaves 5'-deoxyadenosine, a toxic by-product of radical S-adenosylmethionine (SAM) enzymes, into 5-deoxyribose and adenine. The chain is 5'-methylthioadenosine/S-adenosylhomocysteine nucleosidase from Staphylococcus aureus (strain bovine RF122 / ET3-1).